Here is a 403-residue protein sequence, read N- to C-terminus: S-adenosylmethionine synthase (403 aa).

Histidine 15 is an ATP binding site. Aspartate 17 lines the Mg(2+) pocket. Glutamate 43 is a binding site for K(+). Positions 56 and 99 each coordinate L-methionine. The segment at 99 to 109 (QSPDINQGVDR) is flexible loop. ATP is bound by residues 166 to 168 (DAK), 232 to 233 (KF), aspartate 241, 247 to 248 (RK), alanine 264, and lysine 268. Position 241 (aspartate 241) interacts with L-methionine. Lysine 272 contacts L-methionine.

It belongs to the AdoMet synthase family. In terms of assembly, homotetramer; dimer of dimers. The cofactor is Mg(2+). It depends on K(+) as a cofactor.

Its subcellular location is the cytoplasm. The enzyme catalyses L-methionine + ATP + H2O = S-adenosyl-L-methionine + phosphate + diphosphate. It functions in the pathway amino-acid biosynthesis; S-adenosyl-L-methionine biosynthesis; S-adenosyl-L-methionine from L-methionine: step 1/1. Functionally, catalyzes the formation of S-adenosylmethionine (AdoMet) from methionine and ATP. The overall synthetic reaction is composed of two sequential steps, AdoMet formation and the subsequent tripolyphosphate hydrolysis which occurs prior to release of AdoMet from the enzyme. The protein is S-adenosylmethionine synthase of Xylella fastidiosa (strain Temecula1 / ATCC 700964).